Here is a 273-residue protein sequence, read N- to C-terminus: Putative pyruvate, phosphate dikinase regulatory protein (273 aa).

G153–T160 serves as a coordination point for ADP.

Belongs to the pyruvate, phosphate/water dikinase regulatory protein family. PDRP subfamily.

It catalyses the reaction N(tele)-phospho-L-histidyl/L-threonyl-[pyruvate, phosphate dikinase] + ADP = N(tele)-phospho-L-histidyl/O-phospho-L-threonyl-[pyruvate, phosphate dikinase] + AMP + H(+). The enzyme catalyses N(tele)-phospho-L-histidyl/O-phospho-L-threonyl-[pyruvate, phosphate dikinase] + phosphate + H(+) = N(tele)-phospho-L-histidyl/L-threonyl-[pyruvate, phosphate dikinase] + diphosphate. Functionally, bifunctional serine/threonine kinase and phosphorylase involved in the regulation of the pyruvate, phosphate dikinase (PPDK) by catalyzing its phosphorylation/dephosphorylation. This Rhizobium etli (strain ATCC 51251 / DSM 11541 / JCM 21823 / NBRC 15573 / CFN 42) protein is Putative pyruvate, phosphate dikinase regulatory protein.